The primary structure comprises 196 residues: Protein kinase OspG (196 aa).

The protein belongs to the protein kinase superfamily. Autophosphorylated.

Its subcellular location is the secreted. The protein localises to the host cell. Effector proteins function to alter host cell physiology and promote bacterial survival in host tissues. This protein is a kinase that is involved in down-regulation of the host innate response induced by invasive bacteria. In Shigella flexneri serotype X (strain 2002017), this protein is Protein kinase OspG (ospG).